The following is a 278-amino-acid chain: Deoxyuridine 5'-triphosphate nucleotidohydrolase (278 aa).

Substrate is bound by residues 171 to 173 (RSG) and 273 to 274 (FG).

It belongs to the dUTPase family. It depends on Mg(2+) as a cofactor.

The catalysed reaction is dUTP + H2O = dUMP + diphosphate + H(+). Functionally, involved in nucleotide metabolism: produces dUMP, the immediate precursor of thymidine nucleotides and decreases the intracellular concentration of dUTP to avoid uracil incorporation into viral DNA. This chain is Deoxyuridine 5'-triphosphate nucleotidohydrolase, found in Homo sapiens (Human).